A 406-amino-acid chain; its full sequence is Tryptophan synthase beta chain (406 aa).

K99 is subject to N6-(pyridoxal phosphate)lysine.

This sequence belongs to the TrpB family. Tetramer of two alpha and two beta chains. Pyridoxal 5'-phosphate is required as a cofactor.

The enzyme catalyses (1S,2R)-1-C-(indol-3-yl)glycerol 3-phosphate + L-serine = D-glyceraldehyde 3-phosphate + L-tryptophan + H2O. It functions in the pathway amino-acid biosynthesis; L-tryptophan biosynthesis; L-tryptophan from chorismate: step 5/5. In terms of biological role, the beta subunit is responsible for the synthesis of L-tryptophan from indole and L-serine. This Brucella abortus (strain 2308) protein is Tryptophan synthase beta chain.